Here is a 112-residue protein sequence, read N- to C-terminus: Ribonuclease P protein component (112 aa).

The protein belongs to the RnpA family. In terms of assembly, consists of a catalytic RNA component (M1 or rnpB) and a protein subunit.

The enzyme catalyses Endonucleolytic cleavage of RNA, removing 5'-extranucleotides from tRNA precursor.. Its function is as follows. RNaseP catalyzes the removal of the 5'-leader sequence from pre-tRNA to produce the mature 5'-terminus. It can also cleave other RNA substrates such as 4.5S RNA. The protein component plays an auxiliary but essential role in vivo by binding to the 5'-leader sequence and broadening the substrate specificity of the ribozyme. This Mycoplasma mobile (strain ATCC 43663 / 163K / NCTC 11711) (Mesomycoplasma mobile) protein is Ribonuclease P protein component.